Consider the following 363-residue polypeptide: Circumsporozoite protein (363 aa).

Positions 1–22 are cleaved as a signal peptide; it reads MKNFILLAVSSILLVDLLPTHF. The span at 48 to 57 shows a compositional bias: polar residues; it reads GAQQVRQSAS. Residues 48-278 are disordered; sequence GAQQVRQSAS…GQNNQGANAP (231 aa). The span at 61-96 shows a compositional bias: basic and acidic residues; it reads GLGEKPKEGADKEKKKEKGKEKEEEPKKPNENKLKQ. A required for the binding to heparan sulfate proteoglycans (HSPGs) on the surface of host hepatocytes region spans residues 80 to 88; sequence KEKEEEPKK. Residues 93-97 form a region I; contains the proteolytic cleavage site region; that stretch reads KLKQP. Residues 98–109 form a 1; approximate repeat; that stretch reads NEGQPQAQGDGA. The interval 98 to 241 is 12 X 12 AA approximate tandem repeats of N-A-G-Q-P-Q-A-Q-G-D-G-A; it reads NEGQPQAQGD…GQPQAQGDGA (144 aa). 11 consecutive repeat copies span residues 110–121, 122–133, 134–145, 146–157, 158–169, 170–181, 182–193, 194–205, 206–217, 218–229, and 230–241. The segment covering 248–259 has biased composition (gly residues); sequence RNGGGAPAGGNE. A compositionally biased stretch (low complexity) spans 260 to 277; sequence GNKQAGKGQGQNNQGANA. One can recognise a TSP type-1 domain in the interval 289–341; the sequence is KIRSSVTTEWTPCSVTCGNGVRIRRKAHAGNKKAEDLTMDDLEVEACVMDKCA. 2 cysteine pairs are disulfide-bonded: C301-C335 and C305-C340. An O-linked (Fuc) threonine glycan is attached at T304. The GPI-anchor amidated cysteine moiety is linked to residue C340. Residues 341–363 constitute a propeptide, removed in mature form; it reads AGIFNVVSNSLGLVILLVLALFN.

It belongs to the plasmodium circumsporozoite protein family. Post-translationally, during host cell invasion, proteolytically cleaved at the cell membrane in the region I by a papain-like cysteine protease of parasite origin. Cleavage is triggered by the sporozoite contact with highly sulfated heparan sulfate proteoglycans (HSPGs) present on the host hepatocyte cell surface. Cleavage exposes the TSP type-1 (TSR) domain and is required for productive invasion of host hepatocytes but not for adhesion to the host cell membrane. Cleavage is dispensable for sporozoite development in the oocyst, motility and for traversal of host and vector cells. O-glycosylated; maybe by POFUT2.

It localises to the cell membrane. The protein resides in the cytoplasm. Its function is as follows. Essential sporozoite protein. In the mosquito vector, required for sporozoite development in the oocyst, migration through the vector hemolymph and entry into the vector salivary glands. In the vertebrate host, required for sporozoite migration through the host dermis and infection of host hepatocytes. Binds to highly sulfated heparan sulfate proteoglycans (HSPGs) on the surface of host hepatocytes. In terms of biological role, in the vertebrate host, binds to highly sulfated heparan sulfate proteoglycans (HSPGs) on the surface of host hepatocytes and is required for sporozoite invasion of the host hepatocytes. This Plasmodium knowlesi (strain H) protein is Circumsporozoite protein.